Reading from the N-terminus, the 261-residue chain is Carnitinyl-CoA dehydratase (261 aa).

Residue glutamate 111 is the Nucleophile of the active site. Glutamate 131 acts as the Proton acceptor in catalysis.

This sequence belongs to the enoyl-CoA hydratase/isomerase family.

The catalysed reaction is (R)-carnitinyl-CoA = crotonobetainyl-CoA + H2O. Its pathway is amine and polyamine metabolism; carnitine metabolism. Functionally, catalyzes the reversible dehydration of L-carnitinyl-CoA to crotonobetainyl-CoA. The polypeptide is Carnitinyl-CoA dehydratase (Escherichia coli O157:H7).